We begin with the raw amino-acid sequence, 199 residues long: Elongation factor Ts, chloroplastic (199 aa).

This sequence belongs to the EF-Ts family.

Its subcellular location is the plastid. The protein resides in the chloroplast. Its function is as follows. Associates with the EF-Tu.GDP complex and induces the exchange of GDP to GTP. It remains bound to the aminoacyl-tRNA.EF-Tu.GTP complex up to the GTP hydrolysis stage on the ribosome. The chain is Elongation factor Ts, chloroplastic (tsf) from Galdieria sulphuraria (Red alga).